Reading from the N-terminus, the 419-residue chain is Tyrosine--tRNA ligase (419 aa).

Y34 lines the L-tyrosine pocket. Residues 39–48 (PTADSLHLGH) carry the 'HIGH' region motif. Residues Y169 and Q173 each coordinate L-tyrosine. The 'KMSKS' region motif lies at 229 to 233 (KFGKS). K232 lines the ATP pocket. The 68-residue stretch at 352–419 (LNIIDLLVTS…KKKYFVLNFK (68 aa)) folds into the S4 RNA-binding domain.

The protein belongs to the class-I aminoacyl-tRNA synthetase family. TyrS type 1 subfamily. In terms of assembly, homodimer.

It localises to the cytoplasm. The enzyme catalyses tRNA(Tyr) + L-tyrosine + ATP = L-tyrosyl-tRNA(Tyr) + AMP + diphosphate + H(+). In terms of biological role, catalyzes the attachment of tyrosine to tRNA(Tyr) in a two-step reaction: tyrosine is first activated by ATP to form Tyr-AMP and then transferred to the acceptor end of tRNA(Tyr). This is Tyrosine--tRNA ligase from Streptococcus agalactiae serotype Ia (strain ATCC 27591 / A909 / CDC SS700).